The chain runs to 337 residues: GTPase Obg (337 aa).

Residues 4–162 (SNFVDYAKIH…RQIVFQLKLL (159 aa)) enclose the Obg domain. The region spanning 163-329 (ADVGLVGFPN…LKDLLWEKLR (167 aa)) is the OBG-type G domain. Residues 169-176 (GFPNTGKS), 194-198 (FTTLE), 216-219 (DIPG), 283-286 (SKSD), and 310-312 (SSF) each bind GTP. Mg(2+) contacts are provided by S176 and T196.

This sequence belongs to the TRAFAC class OBG-HflX-like GTPase superfamily. OBG GTPase family. In terms of assembly, monomer. Mg(2+) serves as cofactor.

It is found in the cytoplasm. In terms of biological role, an essential GTPase which binds GTP, GDP and possibly (p)ppGpp with moderate affinity, with high nucleotide exchange rates and a fairly low GTP hydrolysis rate. Plays a role in control of the cell cycle, stress response, ribosome biogenesis and in those bacteria that undergo differentiation, in morphogenesis control. The protein is GTPase Obg of Azobacteroides pseudotrichonymphae genomovar. CFP2.